Consider the following 387-residue polypeptide: 4-hydroxy-3-methylbut-2-en-1-yl diphosphate synthase (flavodoxin) (387 aa).

The [4Fe-4S] cluster site is built by C272, C275, C307, and E314.

It belongs to the IspG family. It depends on [4Fe-4S] cluster as a cofactor.

The enzyme catalyses (2E)-4-hydroxy-3-methylbut-2-enyl diphosphate + oxidized [flavodoxin] + H2O + 2 H(+) = 2-C-methyl-D-erythritol 2,4-cyclic diphosphate + reduced [flavodoxin]. Its pathway is isoprenoid biosynthesis; isopentenyl diphosphate biosynthesis via DXP pathway; isopentenyl diphosphate from 1-deoxy-D-xylulose 5-phosphate: step 5/6. Its function is as follows. Converts 2C-methyl-D-erythritol 2,4-cyclodiphosphate (ME-2,4cPP) into 1-hydroxy-2-methyl-2-(E)-butenyl 4-diphosphate. This is 4-hydroxy-3-methylbut-2-en-1-yl diphosphate synthase (flavodoxin) from Granulibacter bethesdensis (strain ATCC BAA-1260 / CGDNIH1).